We begin with the raw amino-acid sequence, 502 residues long: MSQEKYIMAIDQGTTSSRAIIFNKKGEKVSSSQKEFTQIFPQAGWVEHNANEIWNSVQSVIAGAFIESGVKPNQIEAIGITNQRETTVVWDKKTGLPIYNAIVWQSRQTAPLAEQLKSQGYVEKFHEKTGLIIDAYFSATKVRWILDHVEGAQERAEKGELLFGTIDTWLVWKLTDGAAHVTDYSNAARTMLYNIKELKWDDEILEILNIPKAILPEVRSNSEIYGKTAPFHFYGGEVPISGMAGDQQAALFGQLAFEPGMVKNTYGTGSFIIMNTGEEMQLSENNLLTTIGYGINGKVYYALEGSIFIAGSAIQWLRDGLRMVENSPESEKYARDSHNNDEVYVVPAFTGLGAPYWNQNARGSVFGLTRGTSKEDFIKATLQSIAYQVRDIIDTMQMDTQTAIQVLKVDGGAAMNNFLMQFQADILGIDIARAKNLETTALGAAFLAGLSVGYWKDLDELKLLNETGELFEPSMNESRKEQLYKGWKKAVKATQVFAEVDD.

Thr14 provides a ligand contact to ADP. ATP-binding residues include Thr14, Thr15, and Ser16. Residue Thr14 coordinates sn-glycerol 3-phosphate. Position 18 (Arg18) interacts with ADP. Sn-glycerol 3-phosphate is bound by residues Arg84, Glu85, and Tyr136. Residues Arg84, Glu85, and Tyr136 each contribute to the glycerol site. His232 is subject to Phosphohistidine; by HPr. Asp246 is a sn-glycerol 3-phosphate binding site. Glycerol-binding residues include Asp246 and Gln247. The ADP site is built by Thr268 and Gly311. Residues Thr268, Gly311, Gln315, and Gly412 each contribute to the ATP site. Residues Gly412 and Asn416 each contribute to the ADP site.

The protein belongs to the FGGY kinase family. As to quaternary structure, homotetramer and homodimer (in equilibrium). The phosphoenolpyruvate-dependent sugar phosphotransferase system (PTS), including enzyme I, and histidine-containing protein (HPr) are required for the phosphorylation, which leads to the activation of the enzyme.

It catalyses the reaction glycerol + ATP = sn-glycerol 3-phosphate + ADP + H(+). It participates in polyol metabolism; glycerol degradation via glycerol kinase pathway; sn-glycerol 3-phosphate from glycerol: step 1/1. Activated by phosphorylation and inhibited by fructose 1,6-bisphosphate (FBP). Its function is as follows. Key enzyme in the regulation of glycerol uptake and metabolism. Catalyzes the phosphorylation of glycerol to yield sn-glycerol 3-phosphate. In Streptococcus pneumoniae (strain Hungary19A-6), this protein is Glycerol kinase.